The following is a 135-amino-acid chain: NADH-quinone oxidoreductase subunit K (135 aa).

Transmembrane regions (helical) follow at residues 33-53 (VLGL…FAIG), 63-83 (FLFM…AFVV), and 95-115 (IMFI…LAIL).

The protein belongs to the complex I subunit 4L family. NDH-1 is composed of 14 different subunits. Subunits NuoA, H, J, K, L, M, N constitute the membrane sector of the complex.

It is found in the cell inner membrane. The catalysed reaction is a quinone + NADH + 5 H(+)(in) = a quinol + NAD(+) + 4 H(+)(out). NDH-1 shuttles electrons from NADH, via FMN and iron-sulfur (Fe-S) centers, to quinones in the respiratory chain. The immediate electron acceptor for the enzyme in this species is believed to be ubiquinone. Couples the redox reaction to proton translocation (for every two electrons transferred, four hydrogen ions are translocated across the cytoplasmic membrane), and thus conserves the redox energy in a proton gradient. This chain is NADH-quinone oxidoreductase subunit K, found in Psychrobacter cryohalolentis (strain ATCC BAA-1226 / DSM 17306 / VKM B-2378 / K5).